The following is a 453-amino-acid chain: UDP-N-acetylmuramoylalanine--D-glutamate ligase (453 aa).

120 to 126 (GSNGKST) is an ATP binding site.

This sequence belongs to the MurCDEF family.

It is found in the cytoplasm. It carries out the reaction UDP-N-acetyl-alpha-D-muramoyl-L-alanine + D-glutamate + ATP = UDP-N-acetyl-alpha-D-muramoyl-L-alanyl-D-glutamate + ADP + phosphate + H(+). It functions in the pathway cell wall biogenesis; peptidoglycan biosynthesis. Functionally, cell wall formation. Catalyzes the addition of glutamate to the nucleotide precursor UDP-N-acetylmuramoyl-L-alanine (UMA). The chain is UDP-N-acetylmuramoylalanine--D-glutamate ligase from Teredinibacter turnerae (strain ATCC 39867 / T7901).